The sequence spans 218 residues: Small ribosomal subunit protein uS3c (218 aa).

Positions 47-118 constitute a KH type-2 domain; sequence VQKNIRISSG…KLNIAITRIS (72 aa).

It belongs to the universal ribosomal protein uS3 family. In terms of assembly, part of the 30S ribosomal subunit.

It is found in the plastid. Its subcellular location is the chloroplast. This Aethionema cordifolium (Lebanon stonecress) protein is Small ribosomal subunit protein uS3c (rps3).